Here is a 287-residue protein sequence, read N- to C-terminus: CTD small phosphatase-like protein 3 (287 aa).

In terms of domain architecture, FCP1 homology spans 60–219; the sequence is RSTPEYTLVL…LKLCSFLEAI (160 aa).

The protein belongs to the CTDSPL2 family.

Probable phosphatase. The polypeptide is CTD small phosphatase-like protein 3 (scpl-3) (Caenorhabditis elegans).